Reading from the N-terminus, the 120-residue chain is NAD(P)H-quinone oxidoreductase subunit 3, chloroplastic (120 aa).

3 consecutive transmembrane segments (helical) span residues 9–29, 64–84, and 88–108; these read IFWA…LISG, MFAL…PWAM, and VLGV…IVGS.

Belongs to the complex I subunit 3 family. NDH is composed of at least 16 different subunits, 5 of which are encoded in the nucleus.

It is found in the plastid. It localises to the chloroplast thylakoid membrane. It carries out the reaction a plastoquinone + NADH + (n+1) H(+)(in) = a plastoquinol + NAD(+) + n H(+)(out). It catalyses the reaction a plastoquinone + NADPH + (n+1) H(+)(in) = a plastoquinol + NADP(+) + n H(+)(out). Functionally, NDH shuttles electrons from NAD(P)H:plastoquinone, via FMN and iron-sulfur (Fe-S) centers, to quinones in the photosynthetic chain and possibly in a chloroplast respiratory chain. The immediate electron acceptor for the enzyme in this species is believed to be plastoquinone. Couples the redox reaction to proton translocation, and thus conserves the redox energy in a proton gradient. In Acorus calamus var. americanus (American sweet flag), this protein is NAD(P)H-quinone oxidoreductase subunit 3, chloroplastic.